A 305-amino-acid polypeptide reads, in one-letter code: D-alanine--D-alanine ligase (305 aa).

The ATP-grasp domain occupies lysine 99 to asparagine 300. Asparagine 126–threonine 181 lines the ATP pocket.

It belongs to the D-alanine--D-alanine ligase family.

It localises to the cytoplasm. The enzyme catalyses 2 D-alanine + ATP = D-alanyl-D-alanine + ADP + phosphate + H(+). Its pathway is cell wall biogenesis; peptidoglycan biosynthesis. Its function is as follows. Cell wall formation. In Halalkalibacterium halodurans (strain ATCC BAA-125 / DSM 18197 / FERM 7344 / JCM 9153 / C-125) (Bacillus halodurans), this protein is D-alanine--D-alanine ligase.